The primary structure comprises 932 residues: Protein translocase subunit SecA (932 aa).

ATP is bound by residues Q87, 105 to 109 (GEGKT), and D515. The Zn(2+) site is built by C916, C918, C927, and H928.

The protein belongs to the SecA family. Monomer and homodimer. Part of the essential Sec protein translocation apparatus which comprises SecA, SecYEG and auxiliary proteins SecDF-YajC and YidC. Zn(2+) serves as cofactor.

The protein resides in the cell inner membrane. Its subcellular location is the cytoplasm. It catalyses the reaction ATP + H2O + cellular proteinSide 1 = ADP + phosphate + cellular proteinSide 2.. In terms of biological role, part of the Sec protein translocase complex. Interacts with the SecYEG preprotein conducting channel. Has a central role in coupling the hydrolysis of ATP to the transfer of proteins into and across the cell membrane, serving both as a receptor for the preprotein-SecB complex and as an ATP-driven molecular motor driving the stepwise translocation of polypeptide chains across the membrane. The protein is Protein translocase subunit SecA of Burkholderia lata (strain ATCC 17760 / DSM 23089 / LMG 22485 / NCIMB 9086 / R18194 / 383).